Here is a 274-residue protein sequence, read N- to C-terminus: MLPLYWAVFTSPGPEIFRVGSVVIRWYGVLIAAAIVLGLQLSRHLATYRRIKPDDISDLAIWLVIGAIPCARLYYVLFQWEYYSQHLDQVATIWRGGIAIHGAILGGMLAALIFSRLKKVSFWQLADLVAPSLILGQAIGRWGNFFNSEAFGDPTDLPWKLFIPPARRPLAYRNSAYFHPTFLYESVWNLMVLGILLALFFKFPKAKKGTIFLVYAVTYSLGRLWIEGLRTDSLMLGPLRIAQVVSLIGIGIGMLGLTWLYLLKRSLPDTKQAS.

4 helical membrane-spanning segments follow: residues 19-39 (VGSV…VLGL), 59-79 (LAIW…VLFQ), 93-113 (IWRG…AALI), and 120-140 (VSFW…QAIG). Arginine 141 lines the a 1,2-diacyl-sn-glycero-3-phospho-(1'-sn-glycerol) pocket. A run of 3 helical transmembrane segments spans residues 181–201 (TFLY…ALFF), 209–229 (GTIF…IEGL), and 243–263 (QVVS…LYLL).

Belongs to the Lgt family.

It is found in the cell inner membrane. The catalysed reaction is L-cysteinyl-[prolipoprotein] + a 1,2-diacyl-sn-glycero-3-phospho-(1'-sn-glycerol) = an S-1,2-diacyl-sn-glyceryl-L-cysteinyl-[prolipoprotein] + sn-glycerol 1-phosphate + H(+). It functions in the pathway protein modification; lipoprotein biosynthesis (diacylglyceryl transfer). Catalyzes the transfer of the diacylglyceryl group from phosphatidylglycerol to the sulfhydryl group of the N-terminal cysteine of a prolipoprotein, the first step in the formation of mature lipoproteins. In Acaryochloris marina (strain MBIC 11017), this protein is Phosphatidylglycerol--prolipoprotein diacylglyceryl transferase.